Here is a 312-residue protein sequence, read N- to C-terminus: Ribonuclease Z (312 aa).

Zn(2+) contacts are provided by His-62, His-64, Asp-66, His-67, His-144, Asp-215, and His-273. The Proton acceptor role is filled by Asp-66.

The protein belongs to the RNase Z family. In terms of assembly, homodimer. Zn(2+) is required as a cofactor.

It carries out the reaction Endonucleolytic cleavage of RNA, removing extra 3' nucleotides from tRNA precursor, generating 3' termini of tRNAs. A 3'-hydroxy group is left at the tRNA terminus and a 5'-phosphoryl group is left at the trailer molecule.. Functionally, zinc phosphodiesterase, which displays some tRNA 3'-processing endonuclease activity. Probably involved in tRNA maturation, by removing a 3'-trailer from precursor tRNA. This is Ribonuclease Z from Prochlorococcus marinus (strain MIT 9312).